A 290-amino-acid polypeptide reads, in one-letter code: Pre-mRNA-splicing factor cwf20 (290 aa).

2 disordered regions span residues 1-61 and 114-134; these read MSLV…KSSF and PNNS…KKST. Over residues 114–128 the composition is skewed to polar residues; sequence PNNSVSDLTSTGSSE.

Belongs to the 40S cdc5-associated complex (or cwf complex), a spliceosome sub-complex reminiscent of a late-stage spliceosome composed of the U2, U5 and U6 snRNAs and at least brr2, cdc5, cwf2/prp3, cwf3/syf1, cwf4/syf3, cwf5/ecm2, spp42/cwf6, cwf7/spf27, cwf8, cwf9, cwf10, cwf11, cwf12, prp45/cwf13, cwf14, cwf15, cwf16, cwf17, cwf18, cwf19, cwf20, cwf21, cwf22, cwf23, cwf24, cwf25, cwf26, cyp7/cwf27, cwf28, cwf29/ist3, lea1, msl1, prp5/cwf1, prp10, prp12/sap130, prp17, prp22, sap61, sap62, sap114, sap145, slu7, smb1, smd1, smd3, smf1, smg1 and syf2.

Its subcellular location is the nucleus. Functionally, involved in mRNA splicing where it associates with cdc5 and the other cwf proteins as part of the spliceosome. This chain is Pre-mRNA-splicing factor cwf20 (cwf20), found in Schizosaccharomyces pombe (strain 972 / ATCC 24843) (Fission yeast).